The chain runs to 371 residues: MSNQHTLLISNLLPVGSNISTWWNFGSMLLICLTLQIMTGFFLAIHYTANINLAFSSVVHITRDVPYGWIMQNLHTIGASMFFICIYTHIARGLYYGLYLNKSVWLSGTTLLITLMATAFFGYVLPWGQMSFWAATVITNLLTAIPYLGTTITTWLWGGFSINDPTLTRFFALHFIIPFAIISLSSIHIILLHNKGSNNPLGTNSDIDKIPFHPYHSYKDTLTSTFMLITLFIILSFTPDLFNDPENFSKANPLITPQHIKPEWYFLFAYGILRSIPNKLGGTLALLMSVIILTTMPFTHTSYVRSMTFRPLAQTMFWMLIATFITITWTASKPVEPPFIIISQTTSIFYFSFFIMNPLLGWTENKIMMNY.

The next 4 membrane-spanning stretches (helical) occupy residues 25–45, 69–90, 105–125, and 170–190; these read FGSMLLICLTLQIMTGFFLAI, WIMQNLHTIGASMFFICIYTHI, WLSGTTLLITLMATAFFGYVL, and FFALHFIIPFAIISLSSIHII. Residues His75 and His89 each coordinate heme b. Heme b contacts are provided by His174 and His188. His193 lines the a ubiquinone pocket. 4 consecutive transmembrane segments (helical) span residues 218–238, 280–300, 312–332, and 339–358; these read YKDTLTSTFMLITLFIILSFT, LGGTLALLMSVIILTTMPFTH, LAQTMFWMLIATFITITWTAS, and FIIISQTTSIFYFSFFIMNP.

This sequence belongs to the cytochrome b family. The cytochrome bc1 complex contains 3 respiratory subunits (MT-CYB, CYC1 and UQCRFS1), 2 core proteins (UQCRC1 and UQCRC2) and probably 6 low-molecular weight proteins. The cofactor is heme b.

It localises to the mitochondrion inner membrane. Component of the ubiquinol-cytochrome c reductase complex (complex III or cytochrome b-c1 complex) that is part of the mitochondrial respiratory chain. The b-c1 complex mediates electron transfer from ubiquinol to cytochrome c. Contributes to the generation of a proton gradient across the mitochondrial membrane that is then used for ATP synthesis. This Sinomicrurus macclellandi (Macclelland's coral snake) protein is Cytochrome b (MT-CYB).